Reading from the N-terminus, the 33-residue chain is Cytochrome b6-f complex subunit 8 (33 aa).

Residues 2-22 (LFTFAWASLAAIFTFSIAMVV) form a helical membrane-spanning segment.

The protein belongs to the PetN family. In terms of assembly, the 4 large subunits of the cytochrome b6-f complex are cytochrome b6, subunit IV (17 kDa polypeptide, PetD), cytochrome f and the Rieske protein, while the 4 small subunits are PetG, PetL, PetM and PetN. The complex functions as a dimer.

Its subcellular location is the cellular thylakoid membrane. Component of the cytochrome b6-f complex, which mediates electron transfer between photosystem II (PSII) and photosystem I (PSI), cyclic electron flow around PSI, and state transitions. The protein is Cytochrome b6-f complex subunit 8 of Prochlorococcus marinus (strain SARG / CCMP1375 / SS120).